The following is a 268-amino-acid chain: MSQLLSSPPMAVFSKTFINHKFSDARFLSSHSILTSGGFAGKIIPLKPTARLKLTVKSRQSDYFEKQRFGDSSSSQNAEVSSPRFYVGHSIYKGKAALTIEPRAPEFVALESGAFKLTKEGFLLLQFAPAAGVRQYDWSRKQVFSLSVTEIGNLVSLGPRESCEFFHDPFKGKGSDEGKVRKVLKVEPLPDGSGRFFNLSVQNKLLNVDESVYIPITKAEFAVLISAFNFVLPHLIGWSAFANSIKPEDSNRLNNASPKYGGDYEWSR.

A chloroplast-targeting transit peptide spans 1-75 (MSQLLSSPPM…KQRFGDSSSS (75 aa)). The interval 93–98 (KGKAAL) is required for ssDNA binding. A Nuclear localization signal motif is present at residues 171-185 (KGKGSDEGKVRKVLK).

The protein belongs to the Whirly family. In terms of assembly, homotetramer.

It localises to the plastid. Its subcellular location is the chloroplast. The protein localises to the nucleus. Single-stranded DNA-binding protein that functions in both chloroplasts and nucleus. In chloroplasts, maintains plastid genome stability by preventing break-induced and short homology-dependent illegitimate recombinations. In the nucleus, is recruited to a distal element upstream of the kinesin KP1 to mediate the transcriptional repression of KP1. Can bind double-stranded DNA in vivo. This chain is Single-stranded DNA-binding protein WHY3, chloroplastic (WHY3), found in Arabidopsis thaliana (Mouse-ear cress).